The following is a 332-amino-acid chain: Glycerol-3-phosphate dehydrogenase [NAD(P)+] (332 aa).

4 residues coordinate NADPH: Ser11, Phe12, Lys32, and Lys106. The sn-glycerol 3-phosphate site is built by Lys106, Gly137, and Ser139. Position 141 (Ala141) interacts with NADPH. Residues Lys192, Asp245, Ser255, Arg256, and Asn257 each contribute to the sn-glycerol 3-phosphate site. Residue Lys192 is the Proton acceptor of the active site. Arg256 is an NADPH binding site. Residues Val280 and Glu282 each coordinate NADPH.

Belongs to the NAD-dependent glycerol-3-phosphate dehydrogenase family.

It localises to the cytoplasm. The catalysed reaction is sn-glycerol 3-phosphate + NAD(+) = dihydroxyacetone phosphate + NADH + H(+). It carries out the reaction sn-glycerol 3-phosphate + NADP(+) = dihydroxyacetone phosphate + NADPH + H(+). It functions in the pathway membrane lipid metabolism; glycerophospholipid metabolism. Its function is as follows. Catalyzes the reduction of the glycolytic intermediate dihydroxyacetone phosphate (DHAP) to sn-glycerol 3-phosphate (G3P), the key precursor for phospholipid synthesis. In Staphylococcus haemolyticus (strain JCSC1435), this protein is Glycerol-3-phosphate dehydrogenase [NAD(P)+].